The primary structure comprises 1157 residues: Probable ATP-dependent RNA helicase DHX37 (1157 aa).

Residues 1–10 (MGKLRRRYNI) show a composition bias toward basic residues. 2 disordered regions span residues 1–77 (MGKL…KKEK) and 116–225 (TSKL…AAPP). The segment covering 21–30 (SKGPPEPPPV) has biased composition (pro residues). Positions 159–184 (AEEEEEEEEESESELEEESELDEDPA) are enriched in acidic residues. Composition is skewed to pro residues over residues 198–208 (PLPPAPAPSSQ) and 216–225 (VPPPPAAAPP). In terms of domain architecture, Helicase ATP-binding spans 262 to 429 (MEAVAEHPIV…PRLFAKPPPV (168 aa)). 275–282 (GETGSGKT) lines the ATP pocket. A DEAH box motif is present at residues 372-375 (DEAH). Residues 459–716 (KVCKIHRMLP…DLILQMKALN (258 aa)) enclose the Helicase C-terminal domain. 2 disordered regions span residues 494-523 (PPSR…SRAR) and 542-584 (VLPA…QPDA). Residues 499–515 (RPQEKDDDQKDSVEEMR) show a composition bias toward basic and acidic residues. Residues 547-571 (EGDEDREAEVDEEEGALDSDLDLDL) are compositionally biased toward acidic residues.

It belongs to the DEAD box helicase family. DEAH subfamily. In terms of assembly, part of the small subunit (SSU) processome, composed of more than 70 proteins and the RNA chaperone small nucleolar RNA (snoRNA) U3. Interacts with UTP14A. In terms of tissue distribution, expressed in the fallopian tube, ovary, uterus and testis. Also expressed in the brain.

It localises to the nucleus. It is found in the nucleolus. The protein resides in the cytoplasm. Its subcellular location is the nucleus membrane. The enzyme catalyses ATP + H2O = ADP + phosphate + H(+). Its function is as follows. ATP-binding RNA helicase that plays a role in maturation of the small ribosomal subunit in ribosome biogenesis. Required for the release of the U3 snoRNP from pre-ribosomal particles. Part of the small subunit (SSU) processome, first precursor of the small eukaryotic ribosomal subunit. During the assembly of the SSU processome in the nucleolus, many ribosome biogenesis factors, an RNA chaperone and ribosomal proteins associate with the nascent pre-rRNA and work in concert to generate RNA folding, modifications, rearrangements and cleavage as well as targeted degradation of pre-ribosomal RNA by the RNA exosome. Plays a role in early testis development. Probably also plays a role in brain development. The chain is Probable ATP-dependent RNA helicase DHX37 from Homo sapiens (Human).